We begin with the raw amino-acid sequence, 394 residues long: UPF0229 protein RBAM_009260 (394 aa).

Belongs to the UPF0229 family.

The chain is UPF0229 protein RBAM_009260 from Bacillus velezensis (strain DSM 23117 / BGSC 10A6 / LMG 26770 / FZB42) (Bacillus amyloliquefaciens subsp. plantarum).